We begin with the raw amino-acid sequence, 498 residues long: Capsanthin/capsorubin synthase, chromoplastic (498 aa).

A chromoplast-targeting transit peptide spans 1–52 (METLLKPFPSPLLSIPTPNMYSFKHNSTFPNPTKQKDSRKFHYRNKSSTHFC). 84–112 (VIIIGTGPAGLRLAEQVSKYGIKVCCVDP) is a binding site for NAD(+). Positions 293 to 297 (FLEET) match the FLEET motif motif.

Belongs to the lycopene cyclase family. As to quaternary structure, monomer. Requires FAD as cofactor. NADPH is required as a cofactor.

It localises to the plastid. It is found in the chromoplast. The catalysed reaction is all-trans-violaxanthin = all-trans-capsorubin. The enzyme catalyses all-trans-antheraxanthin = all-trans-capsanthin. It catalyses the reaction all-trans-violaxanthin = (5R,6S)-5,6-epoxi-capsanthin. It carries out the reaction (5R,6S)-5,6-epoxi-capsanthin = all-trans-capsorubin. It participates in carotenoid biosynthesis; capsanthin biosynthesis; capsanthin from antheraxanthin: step 1/1. The protein operates within carotenoid biosynthesis; capsorubin biosynthesis; capsorubin from violaxanthin: step 1/1. In terms of biological role, catalyzes the conversion of the ubiquitous 5,6-epoxycarotenoids, antheraxanthin and violaxanthin, into capsanthin and capsorubin, respectively. The chain is Capsanthin/capsorubin synthase, chromoplastic from Capsicum annuum (Capsicum pepper).